The following is a 201-amino-acid chain: Orotate phosphoribosyltransferase (201 aa).

5-phospho-alpha-D-ribose 1-diphosphate is bound at residue 113–121 (EDIITTGKS). Residues threonine 117 and arginine 145 each coordinate orotate.

The protein belongs to the purine/pyrimidine phosphoribosyltransferase family. PyrE subfamily. As to quaternary structure, homodimer. Requires Mg(2+) as cofactor.

It catalyses the reaction orotidine 5'-phosphate + diphosphate = orotate + 5-phospho-alpha-D-ribose 1-diphosphate. The protein operates within pyrimidine metabolism; UMP biosynthesis via de novo pathway; UMP from orotate: step 1/2. Catalyzes the transfer of a ribosyl phosphate group from 5-phosphoribose 1-diphosphate to orotate, leading to the formation of orotidine monophosphate (OMP). This Helicobacter pylori (strain G27) protein is Orotate phosphoribosyltransferase.